The sequence spans 748 residues: Cytosolic phospholipase A2 (748 aa).

The segment at 1–178 is phospholipid binding; that stretch reads MSFIDPYQHI…MKSFLGEENS (178 aa). One can recognise a C2 domain in the interval 6–124; that stretch reads PYQHIVVEHQ…GEKKEVQLTF (119 aa). Residues D40, T41, D43, N65, D93, A94, and N95 each coordinate Ca(2+). In terms of domain architecture, PLA2c spans 138–740; the sequence is VCSSTDLRFS…SSVEARRFFN (603 aa). Catalysis depends on S228, which acts as the Nucleophile. Positions 431 to 459 are disordered; that stretch reads SNDSSDSEDESQHPKGTENSEANEEYQNS. A compositionally biased stretch (polar residues) spans 449 to 459; that stretch reads NSEANEEYQNS. S505 carries the phosphoserine; by MAPK modification. D549 functions as the Proton acceptor in the catalytic mechanism.

Post-translationally, activated by phosphorylation on a serine residue.

The protein resides in the cytoplasm. The protein localises to the cytoplasmic vesicle. The enzyme catalyses a 1,2-diacyl-sn-glycero-3-phosphocholine + H2O = a 1-acyl-sn-glycero-3-phosphocholine + a fatty acid + H(+). It catalyses the reaction a 1-acyl-sn-glycero-3-phosphocholine + H2O = sn-glycerol 3-phosphocholine + a fatty acid + H(+). Stimulated by agonists such as ATP, EGF, thrombin and bradykinin as well as by cytosolic Ca(2+). Its function is as follows. Selectively hydrolyzes arachidonyl phospholipids in the sn-2 position releasing arachidonic acid. Together with its lysophospholipid activity, it is implicated in the initiation of the inflammatory response. The protein is Cytosolic phospholipase A2 (PLA2G4A) of Gallus gallus (Chicken).